Consider the following 509-residue polypeptide: Pituitary homeobox homolog Ptx1 (509 aa).

The segment covering 70–98 has biased composition (low complexity); sequence NGAGSAGSAESATTTSTALSSGSTGSSTV. 3 disordered regions span residues 70–125, 148–171, and 204–273; these read NGAG…SSVS, QDLVGGYSQHPHHTVVPPHTPKHE, and LNNF…HFTS. The span at 227 to 242 shows a compositional bias: polar residues; that stretch reads RSVNETTIKTENISSS. The segment covering 243 to 258 has biased composition (basic and acidic residues); the sequence is GHDEPMTTSGEEPKND. The segment covering 259-269 has biased composition (basic residues); it reads KKNKRQRRQRT. A DNA-binding region (homeobox) is located at residues 262–322; it reads KRQRRQRTHF…KNRRAKWRKR (61 aa). Positions 460–473 match the OAR motif; that stretch reads SSIATLRLKAKQHA. Residues 464 to 470 carry the Nuclear localization signal motif; the sequence is TLRLKAK.

This sequence belongs to the paired homeobox family. Bicoid subfamily.

The protein localises to the nucleus. In terms of biological role, appears to control physiological cell functions rather than pattern formation during embryogenesis. The sequence is that of Pituitary homeobox homolog Ptx1 (Ptx1) from Drosophila melanogaster (Fruit fly).